A 299-amino-acid polypeptide reads, in one-letter code: Neomycin C epimerase (299 aa).

The region spanning 10 to 222 is the Radical SAM core domain; the sequence is PVRQVRAYRN…WNHIFETGRR (213 aa). [4Fe-4S] cluster-binding residues include Cys26, Cys30, Cys33, Cys226, and Cys247. Cys249 functions as the Proton donor in the catalytic mechanism. [4Fe-4S] cluster contacts are provided by Cys271 and Cys274.

This sequence belongs to the radical SAM superfamily. It depends on [4Fe-4S] cluster as a cofactor.

It catalyses the reaction neomycin C + AH2 + S-adenosyl-L-methionine = neomycin B + 5'-deoxyadenosine + L-methionine + A + H(+). It participates in antibiotic biosynthesis; neomycin biosynthesis. Catalyzes the last step of neomycin B biosynthesis, i.e. the irreversible epimerization at C-5''' of neomycin C to give neomycin B. To a lesser extent, is also able to convert neomycin Y2 to neomycin Y1. This chain is Neomycin C epimerase, found in Streptomyces fradiae (Streptomyces roseoflavus).